Consider the following 382-residue polypeptide: D-galactonate dehydratase 1 (382 aa).

A Mg(2+)-binding site is contributed by Asp-183. Catalysis depends on His-185, which acts as the Proton donor. Residues Glu-209 and Glu-235 each contribute to the Mg(2+) site. His-285 (proton acceptor) is an active-site residue.

This sequence belongs to the mandelate racemase/muconate lactonizing enzyme family. GalD subfamily. The cofactor is Mg(2+).

The enzyme catalyses D-galactonate = 2-dehydro-3-deoxy-D-galactonate + H2O. The protein operates within carbohydrate acid metabolism; D-galactonate degradation; D-glyceraldehyde 3-phosphate and pyruvate from D-galactonate: step 1/3. Catalyzes the dehydration of D-galactonate to 2-keto-3-deoxy-D-galactonate. The polypeptide is D-galactonate dehydratase 1 (Escherichia coli (strain SMS-3-5 / SECEC)).